The primary structure comprises 894 residues: MGIQTATASDVAQHTPMMQQYLRIKAEHPGTLVFYRMGDFYELFFEDAEKAARLLDLTLTQRGASAGNPIKMAGVPHHAVEQYLAKLVKLGESVAICEQIGDPATSKGPVERKVVRVVTPGTLTDAALLSDKNDVYLLAMCVAHNRRGVATSVGLAWLNLASGALRLAELAPDQVAAALERIRPAEVLVADTPGDAASWTPPVNAGALTRVPVWHFDIASGTQRLCDQLEVAGLDGFGAHSLTCAWGAAGALLLYAAATQGQQLRHVRSLKVEYESEYIGLDPATRRNLELTETLRGTESPTLCSLLDTCCTTMGSRLLRHWLHHPPRESAVAQARQQAIGALLEAPPGAGVDSLRGALRQISDIERITGRLALLSARPRDLSSLRDTFIALPELRAQLAAVSPNADSLARIDASLEPPQACVELLRRAVAEEPSAMVRDGGVIARGYDAELDELRDISENCGQFLIDLETRERARTGIGNLRVEYNKVHGFYIEVTRGQTDKVPDDYRRRQTLKNAERYITPELKTFEDKALSAQERALARERSLYDALLQALLPFIPDCQRVASALAELDLLAAFGERARALDWVAPTFSPDAGIEIEQGRHPVVEAQVEQFIANDCSLTPERKLLLITGPNMGGKSTFMRQTALIALLAYVGSYVPARRAAFGPIDRIFTRIGAADDLAGGRSTFMVEMTEAAAILNDATPQSLVLMDEIGRGTSTFDGLALAWAIARHLLAHNGCHTLFATHYFELTQLPAEFPQAANVHLSAVEHGHGIVFLHAVSEGPANQSYGLQVAQLAGVPNAVIRAARKHLAYLEQQSAAQPAPQLDLFAAPMPMLLEDADDERDSKAEALVPPAMQALVERLRGIDPNDLRPREALDLLYELHELAAAPDADH.

632 to 639 is an ATP binding site; it reads GPNMGGKS.

This sequence belongs to the DNA mismatch repair MutS family.

Its function is as follows. This protein is involved in the repair of mismatches in DNA. It is possible that it carries out the mismatch recognition step. This protein has a weak ATPase activity. The sequence is that of DNA mismatch repair protein MutS from Paraburkholderia xenovorans (strain LB400).